Reading from the N-terminus, the 308-residue chain is Ribonuclease Z (308 aa).

Positions 63, 65, 67, 68, 140, 211, and 269 each coordinate Zn(2+). Asp67 functions as the Proton acceptor in the catalytic mechanism.

It belongs to the RNase Z family. In terms of assembly, homodimer. Requires Zn(2+) as cofactor.

It catalyses the reaction Endonucleolytic cleavage of RNA, removing extra 3' nucleotides from tRNA precursor, generating 3' termini of tRNAs. A 3'-hydroxy group is left at the tRNA terminus and a 5'-phosphoryl group is left at the trailer molecule.. Zinc phosphodiesterase, which displays some tRNA 3'-processing endonuclease activity. Probably involved in tRNA maturation, by removing a 3'-trailer from precursor tRNA. The chain is Ribonuclease Z from Bacillus velezensis (strain DSM 23117 / BGSC 10A6 / LMG 26770 / FZB42) (Bacillus amyloliquefaciens subsp. plantarum).